The primary structure comprises 354 residues: Holliday junction branch migration complex subunit RuvB (354 aa).

The tract at residues 1 to 22 (MTLQTDDFAPAPARRVVSAAPA) is disordered. Residues 5 to 194 (TDDFAPAPAR…FGIVARLEFY (190 aa)) are large ATPase domain (RuvB-L). Low complexity predominate over residues 9–22 (APAPARRVVSAAPA). ATP-binding positions include Leu-33, Arg-34, Gly-75, Lys-78, Thr-79, Thr-80, 141–143 (EDY), Arg-184, Tyr-194, and Arg-231. Residue Thr-79 coordinates Mg(2+). The tract at residues 195–265 (SAQELARIVK…IAERALAMLD (71 aa)) is small ATPAse domain (RuvB-S). The head domain (RuvB-H) stretch occupies residues 268–354 (PEGLDVMDRK…GAQAPGLFAV (87 aa)). Residues Arg-323 and Arg-328 each coordinate DNA.

It belongs to the RuvB family. As to quaternary structure, homohexamer. Forms an RuvA(8)-RuvB(12)-Holliday junction (HJ) complex. HJ DNA is sandwiched between 2 RuvA tetramers; dsDNA enters through RuvA and exits via RuvB. An RuvB hexamer assembles on each DNA strand where it exits the tetramer. Each RuvB hexamer is contacted by two RuvA subunits (via domain III) on 2 adjacent RuvB subunits; this complex drives branch migration. In the full resolvosome a probable DNA-RuvA(4)-RuvB(12)-RuvC(2) complex forms which resolves the HJ.

The protein resides in the cytoplasm. The catalysed reaction is ATP + H2O = ADP + phosphate + H(+). The RuvA-RuvB-RuvC complex processes Holliday junction (HJ) DNA during genetic recombination and DNA repair, while the RuvA-RuvB complex plays an important role in the rescue of blocked DNA replication forks via replication fork reversal (RFR). RuvA specifically binds to HJ cruciform DNA, conferring on it an open structure. The RuvB hexamer acts as an ATP-dependent pump, pulling dsDNA into and through the RuvAB complex. RuvB forms 2 homohexamers on either side of HJ DNA bound by 1 or 2 RuvA tetramers; 4 subunits per hexamer contact DNA at a time. Coordinated motions by a converter formed by DNA-disengaged RuvB subunits stimulates ATP hydrolysis and nucleotide exchange. Immobilization of the converter enables RuvB to convert the ATP-contained energy into a lever motion, pulling 2 nucleotides of DNA out of the RuvA tetramer per ATP hydrolyzed, thus driving DNA branch migration. The RuvB motors rotate together with the DNA substrate, which together with the progressing nucleotide cycle form the mechanistic basis for DNA recombination by continuous HJ branch migration. Branch migration allows RuvC to scan DNA until it finds its consensus sequence, where it cleaves and resolves cruciform DNA. In Verminephrobacter eiseniae (strain EF01-2), this protein is Holliday junction branch migration complex subunit RuvB.